A 118-amino-acid polypeptide reads, in one-letter code: Phosphoribosyl-AMP cyclohydrolase (118 aa).

Asp-87 is a binding site for Mg(2+). Cys-88 lines the Zn(2+) pocket. Mg(2+) contacts are provided by Asp-89 and Asp-91. Positions 104 and 111 each coordinate Zn(2+).

The protein belongs to the PRA-CH family. Homodimer. Requires Mg(2+) as cofactor. Zn(2+) is required as a cofactor.

It is found in the cytoplasm. It catalyses the reaction 1-(5-phospho-beta-D-ribosyl)-5'-AMP + H2O = 1-(5-phospho-beta-D-ribosyl)-5-[(5-phospho-beta-D-ribosylamino)methylideneamino]imidazole-4-carboxamide. The protein operates within amino-acid biosynthesis; L-histidine biosynthesis; L-histidine from 5-phospho-alpha-D-ribose 1-diphosphate: step 3/9. In terms of biological role, catalyzes the hydrolysis of the adenine ring of phosphoribosyl-AMP. This Corynebacterium glutamicum (strain R) protein is Phosphoribosyl-AMP cyclohydrolase.